The chain runs to 565 residues: MSQEFDYIIVGAGSAGNTLATRLTEDAGVTVLLLEAGGPDYRFDFRTQMPAALAFPLQGRRYNWAYETDPEPYMDGRRMECGRGKGLGGSSLINGMCYIRGNAMDFDGWAELPGLEDWTYLDCLPYFRKAETRDIGPNDYHGGDGPVSVATPKAGNNPLFHAMVEAGVQAGYPRTEDLNGYQQEGFGPMDRSVTKNGRRSSTARGYLDQAKKRPNLTIVTHALTDRVLFDGKRAVGVTYLVGDSEERVEARARKEVIVSSGAIASPQLLQRSGVGPRALLESLDIPVVHDLPGVGENLQDHLELYLQYACTQPVSLYPSLLWWNQPAIGAEWLFNGTGIGASNQFEAGGFIRTRPEFKWPNIQYHFLPVAINYNGSNGVKEHGFQAHMGSMRSPARGRIQAKSKDPRQHPSILFNYMSTEQDWQEFRDGIRLTREIMAQPALDPYRGREISPGAHVQTDEELDKFIREHAETAFHPSCSCKMGTDDMAVVDGEGRVHGMKGLRVVDASIMPLIITGNLNATTIMIAEKISDKIRGRKPLPRSTAKYYVAGDAPVKGKPMREVKQG.

Residue 6 to 35 (DYIIVGAGSAGNTLATRLTEDAGVTVLLLE) participates in FAD binding. The Proton acceptor role is filled by histidine 475.

This sequence belongs to the GMC oxidoreductase family. FAD serves as cofactor.

The catalysed reaction is choline + A = betaine aldehyde + AH2. It catalyses the reaction betaine aldehyde + NAD(+) + H2O = glycine betaine + NADH + 2 H(+). The protein operates within amine and polyamine biosynthesis; betaine biosynthesis via choline pathway; betaine aldehyde from choline (cytochrome c reductase route): step 1/1. Its function is as follows. Involved in the biosynthesis of the osmoprotectant glycine betaine. Catalyzes the oxidation of choline to betaine aldehyde and betaine aldehyde to glycine betaine at the same rate. This Pseudomonas putida (strain ATCC 700007 / DSM 6899 / JCM 31910 / BCRC 17059 / LMG 24140 / F1) protein is Oxygen-dependent choline dehydrogenase.